A 347-amino-acid polypeptide reads, in one-letter code: MRIEQELKLGFKDVLFRPKRSTLKSRSQVELTRDFTFKHSGRQWSGTPVIAANMDSVGSFAMAKALSEHGVMTAVHKHYTVADWAEFIKENDASVLKNAMVSTGTSEADFQKTKDIMALTDDLIFICIDIANGYSEHLVQYVEKVRAEFPDKVISAGNVVTGDMVEELILAGADIVKVGIGPGSVCTTRVKTGVGYPQLSAIIECADAAHGLGGRIIGDGGCSCAGDVSKAFGGGADFVMLGGMLAGHEESGGEVIEQDGKTFMKFYGMSSQSAMDKHSGGVAKYRAAEGKTVLLPFRGSVHNTISDILGGVRSTCTYVGAAKLKELTKRTTFIRVQEQENNVFGKE.

Position 108-131 (108-131 (ADFQKTKDIMALTDDLIFICIDIA)) interacts with NADP(+). K(+) is bound by residues G181 and G183. Residue C186 is the Thioimidate intermediate of the active site. 216–239 (IIGDGGCSCAGDVSKAFGGGADFV) is a binding site for NADP(+).

It belongs to the IMPDH/GMPR family. GuaC type 1 subfamily. Homotetramer.

The catalysed reaction is IMP + NH4(+) + NADP(+) = GMP + NADPH + 2 H(+). Its function is as follows. Catalyzes the irreversible NADPH-dependent deamination of GMP to IMP. It functions in the conversion of nucleobase, nucleoside and nucleotide derivatives of G to A nucleotides, and in maintaining the intracellular balance of A and G nucleotides. This is GMP reductase from Aliivibrio fischeri (strain ATCC 700601 / ES114) (Vibrio fischeri).